Here is a 305-residue protein sequence, read N- to C-terminus: Oxygen-dependent coproporphyrinogen-III oxidase (305 aa).

Ser-94 contacts substrate. 2 residues coordinate a divalent metal cation: His-98 and His-108. His-108 serves as the catalytic Proton donor. 110–112 (NVR) provides a ligand contact to substrate. His-147 and His-177 together coordinate a divalent metal cation. The important for dimerization stretch occupies residues 242–277 (YVEFNLVYDRGTLFGLQTGGRTESILMSMPPLVRWE). Position 260-262 (260-262 (GGR)) interacts with substrate.

It belongs to the aerobic coproporphyrinogen-III oxidase family. As to quaternary structure, homodimer. The cofactor is a divalent metal cation.

The protein resides in the cytoplasm. It catalyses the reaction coproporphyrinogen III + O2 + 2 H(+) = protoporphyrinogen IX + 2 CO2 + 2 H2O. It participates in porphyrin-containing compound metabolism; protoporphyrin-IX biosynthesis; protoporphyrinogen-IX from coproporphyrinogen-III (O2 route): step 1/1. Functionally, involved in the heme biosynthesis. Catalyzes the aerobic oxidative decarboxylation of propionate groups of rings A and B of coproporphyrinogen-III to yield the vinyl groups in protoporphyrinogen-IX. The protein is Oxygen-dependent coproporphyrinogen-III oxidase of Shewanella denitrificans (strain OS217 / ATCC BAA-1090 / DSM 15013).